The primary structure comprises 329 residues: Pantothenate kinase (329 aa).

The interval 1–21 (MISPVPSIPRSAHRQRPEATP) is disordered. Residue 107 to 114 (GSVAVGKS) coordinates ATP.

This sequence belongs to the prokaryotic pantothenate kinase family.

Its subcellular location is the cytoplasm. It carries out the reaction (R)-pantothenate + ATP = (R)-4'-phosphopantothenate + ADP + H(+). It participates in cofactor biosynthesis; coenzyme A biosynthesis; CoA from (R)-pantothenate: step 1/5. The polypeptide is Pantothenate kinase (coaA) (Streptomyces coelicolor (strain ATCC BAA-471 / A3(2) / M145)).